A 474-amino-acid polypeptide reads, in one-letter code: Protein nucleotidyltransferase YdiU (474 aa).

Residues G89, G91, R92, K112, D124, G125, R175, and R182 each coordinate ATP. D256 acts as the Proton acceptor in catalysis. Mg(2+) contacts are provided by N257 and D266. An ATP-binding site is contributed by D266.

This sequence belongs to the SELO family. Requires Mg(2+) as cofactor. The cofactor is Mn(2+).

It carries out the reaction L-seryl-[protein] + ATP = 3-O-(5'-adenylyl)-L-seryl-[protein] + diphosphate. The catalysed reaction is L-threonyl-[protein] + ATP = 3-O-(5'-adenylyl)-L-threonyl-[protein] + diphosphate. The enzyme catalyses L-tyrosyl-[protein] + ATP = O-(5'-adenylyl)-L-tyrosyl-[protein] + diphosphate. It catalyses the reaction L-histidyl-[protein] + UTP = N(tele)-(5'-uridylyl)-L-histidyl-[protein] + diphosphate. It carries out the reaction L-seryl-[protein] + UTP = O-(5'-uridylyl)-L-seryl-[protein] + diphosphate. The catalysed reaction is L-tyrosyl-[protein] + UTP = O-(5'-uridylyl)-L-tyrosyl-[protein] + diphosphate. Its function is as follows. Nucleotidyltransferase involved in the post-translational modification of proteins. It can catalyze the addition of adenosine monophosphate (AMP) or uridine monophosphate (UMP) to a protein, resulting in modifications known as AMPylation and UMPylation. In Corynebacterium glutamicum (strain ATCC 13032 / DSM 20300 / JCM 1318 / BCRC 11384 / CCUG 27702 / LMG 3730 / NBRC 12168 / NCIMB 10025 / NRRL B-2784 / 534), this protein is Protein nucleotidyltransferase YdiU.